Consider the following 71-residue polypeptide: Small ribosomal subunit protein bS21 (71 aa).

The segment covering Glu48–Arg59 has biased composition (basic residues). The interval Glu48–Tyr71 is disordered. Positions Asn60 to Tyr71 are enriched in basic and acidic residues.

The protein belongs to the bacterial ribosomal protein bS21 family.

In Glaesserella parasuis serovar 5 (strain SH0165) (Haemophilus parasuis), this protein is Small ribosomal subunit protein bS21.